Here is a 279-residue protein sequence, read N- to C-terminus: MFARMASLRALVPVRALLWRAPVRSVHRAAVRETRIVPQLPTFYSANPAHEAHMDRLEALLRKHTKQQARRVAVERTASDRPRWLSFDQYALIGGTSRLKPTQYRQLVSVLDRLHAIDPQLSNGEIAATLEAFLRKSRLEEQNVVRQELDHLGRACAVGRRKTSSAKVWLVRGSGEVLVNGRTFADYFSKIKDRDAIMYPLRVLDAAGKYNIFAAVRGGGVTGQAEAIMHAVAKALVVFNPLLKTRLHRAGVLTRDYRHVERKKPGKRKARKMPAWVKR.

It belongs to the universal ribosomal protein uS9 family.

The protein localises to the mitochondrion. This is Small ribosomal subunit protein uS9m (MRPS9) from Eremothecium gossypii (strain ATCC 10895 / CBS 109.51 / FGSC 9923 / NRRL Y-1056) (Yeast).